The following is an 828-amino-acid chain: Leucine--tRNA ligase (828 aa).

The short motif at 42 to 52 is the 'HIGH' region element; the sequence is PYPSGTLHVGH. The short motif at 582–586 is the 'KMSKS' region element; it reads KMSKS. Position 585 (Lys-585) interacts with ATP.

This sequence belongs to the class-I aminoacyl-tRNA synthetase family.

The protein localises to the cytoplasm. It carries out the reaction tRNA(Leu) + L-leucine + ATP = L-leucyl-tRNA(Leu) + AMP + diphosphate. The polypeptide is Leucine--tRNA ligase (Petrotoga mobilis (strain DSM 10674 / SJ95)).